The sequence spans 193 residues: Ancillary SecYEG translocon subunit (193 aa).

Topologically, residues 1–8 (MLNISKKN) are cytoplasmic. The chain crosses the membrane as a helical span at residues 9 to 29 (IIFFILFFLIISLILFNWKYF). Over 30–193 (SLVNKENLES…MKLNELKEQN (164 aa)) the chain is Periplasmic.

Belongs to the YfgM family. In terms of assembly, interacts with the SecYEG translocon. Forms a complex with PpiD.

The protein localises to the cell inner membrane. Its function is as follows. May mediate protein transfer from the SecYEG translocon to the periplasmic chaperone network via its periplasmic C-terminal region. The chain is Ancillary SecYEG translocon subunit from Buchnera aphidicola subsp. Acyrthosiphon pisum (strain APS) (Acyrthosiphon pisum symbiotic bacterium).